Consider the following 348-residue polypeptide: tRNA N6-adenosine threonylcarbamoyltransferase (348 aa).

Fe cation-binding residues include His-120 and His-124. Residues 143 to 147 (LVSGG), Asp-176, Gly-189, and Asn-282 each bind substrate. A Fe cation-binding site is contributed by Asp-310.

This sequence belongs to the KAE1 / TsaD family. It depends on Fe(2+) as a cofactor.

The protein resides in the cytoplasm. The catalysed reaction is L-threonylcarbamoyladenylate + adenosine(37) in tRNA = N(6)-L-threonylcarbamoyladenosine(37) in tRNA + AMP + H(+). In terms of biological role, required for the formation of a threonylcarbamoyl group on adenosine at position 37 (t(6)A37) in tRNAs that read codons beginning with adenine. Is involved in the transfer of the threonylcarbamoyl moiety of threonylcarbamoyl-AMP (TC-AMP) to the N6 group of A37, together with TsaE and TsaB. TsaD likely plays a direct catalytic role in this reaction. In Paracidovorax citrulli (strain AAC00-1) (Acidovorax citrulli), this protein is tRNA N6-adenosine threonylcarbamoyltransferase.